Reading from the N-terminus, the 343-residue chain is Selenide, water dikinase (343 aa).

The active site involves Sec16. A non-standard amino acid (selenocysteine) is located at residue Sec16. Residues Lys19 and 46-48 (GAE) contribute to the ATP site. Position 49 (Asp49) interacts with Mg(2+). ATP-binding positions include Asp66, Asp89, and 137 to 139 (GHT). Asp89 provides a ligand contact to Mg(2+). Residue Asp225 coordinates Mg(2+).

It belongs to the selenophosphate synthase 1 family. Class I subfamily. Homodimer. Mg(2+) serves as cofactor.

It catalyses the reaction hydrogenselenide + ATP + H2O = selenophosphate + AMP + phosphate + 2 H(+). In terms of biological role, synthesizes selenophosphate from selenide and ATP. This chain is Selenide, water dikinase, found in Citrifermentans bemidjiense (strain ATCC BAA-1014 / DSM 16622 / JCM 12645 / Bem) (Geobacter bemidjiensis).